The following is a 426-amino-acid chain: PI-PLC X domain-containing protein At5g67130 (426 aa).

Residues 1–28 (MSACINGLCRAVTVSLLLLLLSFSFSSA) form the signal peptide. The 157-residue stretch at 76–232 (IINGLPFNKY…MVQENHRLLV (157 aa)) folds into the PI-PLC X-box domain. 2 N-linked (GlcNAc...) asparagine glycosylation sites follow: Asn-151 and Asn-255. Residues 258 to 277 (GDPGVKRGSCPNRKESQPLN) are disordered. N-linked (GlcNAc...) asparagine glycosylation occurs at Asn-370. The GPI-anchor amidated serine moiety is linked to residue Ser-404. The propeptide at 405–426 (VAQLNNIVVFCFSLLPLLIFLL) is removed in mature form.

It localises to the cell membrane. In Arabidopsis thaliana (Mouse-ear cress), this protein is PI-PLC X domain-containing protein At5g67130.